The sequence spans 432 residues: Asparagine--tRNA ligase (432 aa).

Belongs to the class-II aminoacyl-tRNA synthetase family. In terms of assembly, homodimer.

It localises to the cytoplasm. The catalysed reaction is tRNA(Asn) + L-asparagine + ATP = L-asparaginyl-tRNA(Asn) + AMP + diphosphate + H(+). This is Asparagine--tRNA ligase from Lactobacillus delbrueckii subsp. bulgaricus (strain ATCC 11842 / DSM 20081 / BCRC 10696 / JCM 1002 / NBRC 13953 / NCIMB 11778 / NCTC 12712 / WDCM 00102 / Lb 14).